The following is a 444-amino-acid chain: Multidrug resistance protein MdtA (444 aa).

The N-terminal stretch at Met-1–Ala-20 is a signal peptide. A compositionally biased stretch (polar residues) spans Asn-37–Ser-52. 2 disordered regions span residues Asn-37–Pro-60 and Pro-399–Ser-444. Residues Ala-409 to Glu-419 are compositionally biased toward low complexity. Residues Ala-435 to Ser-444 are compositionally biased toward polar residues.

Belongs to the membrane fusion protein (MFP) (TC 8.A.1) family. In terms of assembly, part of a tripartite efflux system composed of MdtA, MdtB and MdtC.

Its subcellular location is the cell inner membrane. This chain is Multidrug resistance protein MdtA, found in Yersinia pseudotuberculosis serotype I (strain IP32953).